The primary structure comprises 279 residues: NADPH-dependent 7-cyano-7-deazaguanine reductase (279 aa).

Residue 86–88 (IES) coordinates substrate. 88-89 (SK) contacts NADPH. Residue cysteine 187 is the Thioimide intermediate of the active site. Aspartate 194 acts as the Proton donor in catalysis. 226-227 (HE) is a binding site for substrate. 255–256 (RG) contacts NADPH.

It belongs to the GTP cyclohydrolase I family. QueF type 2 subfamily. In terms of assembly, homodimer.

It localises to the cytoplasm. It carries out the reaction 7-aminomethyl-7-carbaguanine + 2 NADP(+) = 7-cyano-7-deazaguanine + 2 NADPH + 3 H(+). Its pathway is tRNA modification; tRNA-queuosine biosynthesis. Functionally, catalyzes the NADPH-dependent reduction of 7-cyano-7-deazaguanine (preQ0) to 7-aminomethyl-7-deazaguanine (preQ1). The protein is NADPH-dependent 7-cyano-7-deazaguanine reductase of Pasteurella multocida (strain Pm70).